The following is a 78-amino-acid chain: Lantibiotic cinnamycin (78 aa).

Positions 1 to 59 (MTASILQQSVVDADFRAALLENPAAFGASAAALPTPVEAQDQASLDFWTKDIAATEAFA) are excised as a propeptide. 2 cross-links (beta-methyllanthionine (Cys-Thr)) span residues 60–77 (CRQSCSFGPFTFVCDGNT) and 64–70 (CSFGPFT). A cross-link (lanthionine (Ser-Cys)) is located at residues 63–73 (SCSFGPFTFVC). The segment at residues 65-78 (SFGPFTFVCDGNTK) is a cross-link (lysinoalanine (Ser-Lys)). The residue at position 74 (Asp-74) is a (3R)-3-hydroxyaspartate.

Belongs to the type B lantibiotic family. In terms of processing, maturation of lantibiotics involves the enzymatic conversion of Thr, and Ser into dehydrated AA and the formation of thioether bonds with cysteine or the formation of dialkylamine bonds with lysine. This is followed by membrane translocation and cleavage of the modified precursor.

In terms of biological role, can act as inhibitor of the enzyme phospholipase A2, and of the angiotensin-converting enzyme. Shows inhibitory activities against herpes simplex virus and immunopotentiating activities. Its antimicrobial activities are not very pronounced. The protein is Lantibiotic cinnamycin (cinA) of Streptomyces griseoverticillatus (Streptoverticillium griseoverticillatum).